The chain runs to 212 residues: MAAPPQLRALLVVVNALLRKRRYHAALAVLKGFRNGAVYGAKIRAPHALVMTFLFRNGSLQEKLWAILQATYIHSWNLARFVFTYKGLRALQSYIQGKTYPAHAFLAAFLGGILVFGENNNINSQINMYLLSRVLFALSRLAVEKGYIPEPRWDPFPLLTAVVWGLVLWLFEYHRSTLQPSLQSSMTYLYEDSNVWHDISDFLVYNKSRPSN.

N-linked (GlcNAc...) asparagine glycosylation occurs at Asn-57. 2 helical membrane passes run 97 to 117 (GKTYPAHAFLAAFLGGILVFG) and 153 to 173 (WDPFPLLTAVVWGLVLWLFEY). N-linked (GlcNAc...) asparagine glycosylation occurs at Asn-206.

This sequence belongs to the peroxisomal membrane protein PXMP2/4 family. In terms of assembly, interacts with PEX19. As to expression, expressed in normal prostate epithelial cells, and androgen-sensitive prostate adenocarcinoma cells. Not expressed in androgen-insensitive prostate adenocarcinoma cells.

The protein localises to the peroxisome membrane. In Homo sapiens (Human), this protein is Peroxisomal membrane protein 4 (PXMP4).